We begin with the raw amino-acid sequence, 509 residues long: NADH-quinone oxidoreductase subunit M (509 aa).

A run of 13 helical transmembrane segments spans residues 1–21 (MILPWLILIPFIGGFLCWIAE), 30–50 (WIALLSMTLVLILSLWIWATG), 87–107 (LSLLMVALTGLLGVLSVLCSW), 123–143 (WILGGVIGVFLAIDLFLFFFF), 176–196 (FFIFTQASGLVMLVAILGLVF), 223–243 (WLLMLGFFVAFAVKMPVVPVH), 261–281 (LAGILLKTAAYGLIRFALPLF), 288–308 (FAPIAMWLGIIGIFYGALLSF), 316–336 (LVAYSSVSHMGFVMIGIYSGS), 342–362 (GVVVQMIAHGLSAAALFILCG), 376–396 (MGGLWSRMPYLPAISLFFASA), 422–442 (VIIVIATFGLVFASVYSLIMI), and 467–487 (VLGLAVLLVLLGVYPQPVLDI).

It belongs to the complex I subunit 4 family. In terms of assembly, composed of 13 different subunits. Subunits NuoA, H, J, K, L, M, N constitute the membrane sector of the complex.

It localises to the cell inner membrane. The catalysed reaction is a quinone + NADH + 5 H(+)(in) = a quinol + NAD(+) + 4 H(+)(out). Its function is as follows. NDH-1 shuttles electrons from NADH, via FMN and iron-sulfur (Fe-S) centers, to quinones in the respiratory chain. The immediate electron acceptor for the enzyme in this species is believed to be ubiquinone. Couples the redox reaction to proton translocation (for every two electrons transferred, four hydrogen ions are translocated across the cytoplasmic membrane), and thus conserves the redox energy in a proton gradient. The protein is NADH-quinone oxidoreductase subunit M (nuoM) of Pseudomonas aeruginosa (strain ATCC 15692 / DSM 22644 / CIP 104116 / JCM 14847 / LMG 12228 / 1C / PRS 101 / PAO1).